Reading from the N-terminus, the 262-residue chain is uncharacterized protein (262 aa).

Residues 13-35 traverse the membrane as a helical segment; that stretch reads VVGALLTVVVIVTAAGIIYVISH.

Its subcellular location is the membrane. This is an uncharacterized protein from Archaeoglobus fulgidus (strain ATCC 49558 / DSM 4304 / JCM 9628 / NBRC 100126 / VC-16).